The following is a 205-amino-acid chain: MTTTIRRKFRVSRQMKASLWGSQKDPVHKRNYAPGQHGRAPVKKISDFYKQNAAQRAFRTYYVIGKKQFANVFSKAYRGKGNTNDNLISLLESRVSSVLYRSGMVPTIFAARQLISHKHVTVNGEIVNICSFTLKEGDVVQIRDRASNIPCVVAALNSNSESPHYLEVDREKRSVKLLVLPKFEDVPYPVVMEPNLVTEYFSSKM.

Residues 93–171 form the S4 RNA-binding domain; the sequence is SRVSSVLYRS…SPHYLEVDRE (79 aa).

Belongs to the universal ribosomal protein uS4 family. As to quaternary structure, part of the 30S ribosomal subunit. Contacts protein S5. The interaction surface between S4 and S5 is involved in control of translational fidelity.

One of the primary rRNA binding proteins, it binds directly to 16S rRNA where it nucleates assembly of the body of the 30S subunit. In terms of biological role, with S5 and S12 plays an important role in translational accuracy. The chain is Small ribosomal subunit protein uS4 from Neorickettsia sennetsu (strain ATCC VR-367 / Miyayama) (Ehrlichia sennetsu).